We begin with the raw amino-acid sequence, 236 residues long: Potassium/proton antiporter CemA (236 aa).

The next 4 membrane-spanning stretches (helical) occupy residues 12-32 (TVTSIKYFISFILFVLITNHV), 114-134 (IANVFADLLSLCIFVLALLLG), 161-181 (IILFTDIFVGFHSSHGWEILI), and 196-216 (FIFLFVATFPVVLDTVFKYWI).

Belongs to the CemA family.

It localises to the plastid. The protein localises to the chloroplast inner membrane. The enzyme catalyses K(+)(in) + H(+)(out) = K(+)(out) + H(+)(in). In terms of biological role, contributes to K(+)/H(+) antiport activity by supporting proton efflux to control proton extrusion and homeostasis in chloroplasts in a light-dependent manner to modulate photosynthesis. Prevents excessive induction of non-photochemical quenching (NPQ) under continuous-light conditions. Indirectly promotes efficient inorganic carbon uptake into chloroplasts. This Chlorokybus atmophyticus (Soil alga) protein is Potassium/proton antiporter CemA.